A 375-amino-acid chain; its full sequence is Chaperone protein DnaJ (375 aa).

A J domain is found at 4–68 (DYYEILGVSR…ETRARYDRFG (65 aa)). The CR-type zinc-finger motif lies at 135 to 217 (GGEKEIRISH…CDGKGANQVT (83 aa)). Cys-148, Cys-151, Cys-165, Cys-168, Cys-191, Cys-194, Cys-205, and Cys-208 together coordinate Zn(2+). CXXCXGXG motif repeat units lie at residues 148 to 155 (CEVCSGSG), 165 to 172 (CSTCSGSG), 191 to 198 (CPTCNGTG), and 205 to 212 (CDACDGKG).

The protein belongs to the DnaJ family. As to quaternary structure, homodimer. Zn(2+) is required as a cofactor.

Its subcellular location is the cytoplasm. Participates actively in the response to hyperosmotic and heat shock by preventing the aggregation of stress-denatured proteins and by disaggregating proteins, also in an autonomous, DnaK-independent fashion. Unfolded proteins bind initially to DnaJ; upon interaction with the DnaJ-bound protein, DnaK hydrolyzes its bound ATP, resulting in the formation of a stable complex. GrpE releases ADP from DnaK; ATP binding to DnaK triggers the release of the substrate protein, thus completing the reaction cycle. Several rounds of ATP-dependent interactions between DnaJ, DnaK and GrpE are required for fully efficient folding. Also involved, together with DnaK and GrpE, in the DNA replication of plasmids through activation of initiation proteins. This Nostoc punctiforme (strain ATCC 29133 / PCC 73102) protein is Chaperone protein DnaJ.